The chain runs to 434 residues: Serine--tRNA ligase (434 aa).

L-serine is bound at residue 237–239 (TAE). 268–270 (RAE) is a binding site for ATP. Glu291 lines the L-serine pocket. 358 to 361 (EISS) contacts ATP. Ser393 serves as a coordination point for L-serine.

Belongs to the class-II aminoacyl-tRNA synthetase family. Type-1 seryl-tRNA synthetase subfamily. In terms of assembly, homodimer. The tRNA molecule binds across the dimer.

The protein resides in the cytoplasm. The enzyme catalyses tRNA(Ser) + L-serine + ATP = L-seryl-tRNA(Ser) + AMP + diphosphate + H(+). It carries out the reaction tRNA(Sec) + L-serine + ATP = L-seryl-tRNA(Sec) + AMP + diphosphate + H(+). It participates in aminoacyl-tRNA biosynthesis; selenocysteinyl-tRNA(Sec) biosynthesis; L-seryl-tRNA(Sec) from L-serine and tRNA(Sec): step 1/1. Its function is as follows. Catalyzes the attachment of serine to tRNA(Ser). Is also able to aminoacylate tRNA(Sec) with serine, to form the misacylated tRNA L-seryl-tRNA(Sec), which will be further converted into selenocysteinyl-tRNA(Sec). This is Serine--tRNA ligase from Rhodopseudomonas palustris (strain BisB5).